We begin with the raw amino-acid sequence, 670 residues long: Cyclic AMP-dependent transcription factor ATF-6 alpha (670 aa).

The transcription activation stretch occupies residues 1–150 (MGEPAGVAGT…SLSSAEPLKE (150 aa)). Over 1 to 377 (MGEPAGVAGT…RLKVPSPKRR (377 aa)) the chain is Cytoplasmic. Residue lysine 87 forms a Glycyl lysine isopeptide (Lys-Gly) (interchain with G-Cter in SUMO2) linkage. The segment at 91 to 183 (QPLSPASSSY…NSKPSIQPKP (93 aa)) is disordered. Low complexity-rich tracts occupy residues 94–113 (SPAS…SYSS) and 123–134 (LSSSSQMSPLSL). Lysine 152 is covalently cross-linked (Glycyl lysine isopeptide (Lys-Gly) (interchain with G-Cter in ubiquitin)). In terms of domain architecture, bZIP spans 306–369 (VLRRQQRMIK…DEVVSENQRL (64 aa)). The interval 308-339 (RRQQRMIKNRESACQSRKKKKEYMLGLEARLK) is basic motif. Residues 348–355 (LKKENGTL) form a leucine-zipper region. Residues 378-398 (VVCVMIVLAFIILNYGPMSML) form a helical; Signal-anchor for type II membrane protein membrane-spanning segment. The Lumenal portion of the chain corresponds to 399 to 670 (EQDSRRMNPS…VVSTIPESLQ (272 aa)). Residues 468–589 (QPLINTTESL…ATTHNKTTRP (122 aa)) are interaction with THBS4. 3 N-linked (GlcNAc...) asparagine glycosylation sites follow: asparagine 472, asparagine 584, and asparagine 643.

The protein belongs to the bZIP family. ATF subfamily. As to quaternary structure, interacts with XBP1 isoform 2; the interaction occurs in a ER stress-dependent manner. Interacts with LACC1. In terms of assembly, interacts with THBS4 (via EGF-like 3; calcium-binding domain) which facilitates its processing, activation and nuclear translocation. Interacts (via lumenal domain) with THBS1. Homodimer and heterodimer with ATF6-beta. The dimer interacts with the nuclear transcription factor Y (NF-Y) trimer through direct binding to NF-Y subunit C (NF-YC). Also interacts with the transcription factors GTF2I, YY1 and SRF. In terms of processing, during unfolded protein response, a fragment of approximately 50 kDa containing the cytoplasmic transcription factor domain is released by proteolysis. The cleavage seems to be performed sequentially by site-1 (MBTPS1, S1P) and site-2 (MBTPS2, S2P) proteases. N-glycosylated; in its luminal domain. The glycosylation status may serve as a sensor for ER homeostasis, resulting in ATF6 activation to trigger the unfolded protein response (UPR). Post-translationally, ubiquitinated by RNF186 at Lys-152, which is required for pattern recognition receptor-induced unfolded protein response-associated outcomes. Ubiquitous.

The protein localises to the endoplasmic reticulum membrane. It is found in the golgi apparatus membrane. The protein resides in the nucleus. In terms of biological role, precursor of the transcription factor form (Processed cyclic AMP-dependent transcription factor ATF-6 alpha), which is embedded in the endoplasmic reticulum membrane. Endoplasmic reticulum stress promotes processing of this form, releasing the transcription factor form that translocates into the nucleus, where it activates transcription of genes involved in the unfolded protein response (UPR). Its function is as follows. Transcription factor that initiates the unfolded protein response (UPR) during endoplasmic reticulum stress by activating transcription of genes involved in the UPR. Binds DNA on the 5'-CCAC[GA]-3'half of the ER stress response element (ERSE) (5'-CCAAT-N(9)-CCAC[GA]-3') and of ERSE II (5'-ATTGG-N-CCACG-3'). Binding to ERSE requires binding of NF-Y to ERSE. Could also be involved in activation of transcription by the serum response factor. May play a role in foveal development and cone function in the retina. This is Cyclic AMP-dependent transcription factor ATF-6 alpha (ATF6) from Homo sapiens (Human).